The following is a 350-amino-acid chain: Biotin synthase (350 aa).

A Radical SAM core domain is found at 54–278 (REIQLSTLLS…TMPQSYVRLS (225 aa)). Cysteine 69, cysteine 73, and cysteine 76 together coordinate [4Fe-4S] cluster. Cysteine 113, cysteine 144, cysteine 204, and arginine 276 together coordinate [2Fe-2S] cluster.

The protein belongs to the radical SAM superfamily. Biotin synthase family. Homodimer. The cofactor is [4Fe-4S] cluster. [2Fe-2S] cluster serves as cofactor.

The enzyme catalyses (4R,5S)-dethiobiotin + (sulfur carrier)-SH + 2 reduced [2Fe-2S]-[ferredoxin] + 2 S-adenosyl-L-methionine = (sulfur carrier)-H + biotin + 2 5'-deoxyadenosine + 2 L-methionine + 2 oxidized [2Fe-2S]-[ferredoxin]. The protein operates within cofactor biosynthesis; biotin biosynthesis; biotin from 7,8-diaminononanoate: step 2/2. Catalyzes the conversion of dethiobiotin (DTB) to biotin by the insertion of a sulfur atom into dethiobiotin via a radical-based mechanism. The polypeptide is Biotin synthase (Neisseria meningitidis serogroup C (strain 053442)).